The primary structure comprises 763 residues: DEK domain-containing chromatin-associated protein 3 (763 aa).

Disordered regions lie at residues 1–324 (MGED…RERK) and 458–681 (TGDV…SDKV). Residues 11–20 (PTANKTTSLE) are compositionally biased toward polar residues. 4 stretches are compositionally biased toward basic and acidic residues: residues 32 to 44 (AGGK…AKDE), 72 to 97 (SEVK…KDEG), 124 to 172 (TVMK…KANG), and 180 to 242 (DIKE…KVED). Positions 60-96 (KDDEKAETEDKESEVKKNEDNAETQKMEEKVEVTKDE) form a coiled coil. Positions 214-286 (GKEKEDKEEN…KEESKGSKKR (73 aa)) form a coiled coil. Over residues 243–252 (EKEGSEDEND) the composition is skewed to acidic residues. Positions 253 to 264 (NEKVESKDAKED) are enriched in basic and acidic residues. Acidic residues predominate over residues 265–277 (EKEETNDDKEDEK). A Nuclear localization signal 1 motif is present at residues 284–291 (KKRGKGTS). Positions 295–311 (KVREKNKTEEVKKDAEP) are enriched in basic and acidic residues. Positions 475–484 (KGAKRKRTPK) are enriched in basic residues. Positions 483-490 (PKKTSPTA) match the Nuclear localization signal 2 motif. Positions 485-496 (KTSPTAGSSSSK) are enriched in low complexity. Positions 513–551 (KKSLAHSDDESEEEKEEEEKQEEEKAEEKEEKKEEENEN) form a coiled coil. Residues 521–533 (DESEEEKEEEEKQ) are compositionally biased toward acidic residues. Residues 534-547 (EEEKAEEKEEKKEE) show a composition bias toward basic and acidic residues. The segment covering 557 to 578 (SEDEAPQPSESEEKDESEEHSE) has biased composition (acidic residues). 2 stretches are compositionally biased toward low complexity: residues 606–615 (AVVAAKSSPP) and 650–660 (PIKASPAPSKS). Residues 661–681 (ASKEKPVKRAGKGKDKPSDKV) show a composition bias toward basic and acidic residues. Positions 676 to 731 (KPSDKVLKNAIVEILKRVDFSTATFTDILKELAKEFTEDLTPRKSSIKMIIQEELT) constitute a DEK-C domain. DNA-binding regions lie at residues 694–708 (DFST…KELA) and 723–727 (KMIIQ). A coiled-coil region spans residues 723–753 (KMIIQEELTKLADEEEEEEKKEEDSEKEEAG). The segment at 730-763 (LTKLADEEEEEEKKEEDSEKEEAGGSGGGEEVKA) is disordered. The segment covering 753-763 (GGSGGGEEVKA) has biased composition (gly residues).

Found in a mRNA splicing-dependent exon junction complex (EJC). Binds specifically histones H3 and H4. Interacts with TOP1A, SCC3, At1g61730, At1g20940, At1g13930, DEK4, HDT1, NIT1, SHL, CYP19-1, GEBPL, HSP70-3, PDP2, PDP3, KIN2, RPL11A and PDS5A. As to expression, highly expressed in young seedlings.

The protein localises to the nucleus. The protein resides in the nucleolus. Its function is as follows. Chromatin-associated protein which contributes to the modulation of chromatin structure (such as super-helical structure of DNA) and function. Binds to chromatin of protein-coding genes throughout the genome to regulate nucleosome occupancy and chromatin accessibility, and to modulate the expression of target genes. Negative regulator of stress tolerance (e.g. high salt). The chain is DEK domain-containing chromatin-associated protein 3 from Arabidopsis thaliana (Mouse-ear cress).